The following is a 458-amino-acid chain: GTPase Der (458 aa).

2 EngA-type G domains span residues 9-171 (KTIA…DLNQ) and 197-368 (IQVG…ECFS). Residues 15-22 (GQPNVGKS), 62-66 (DTGGM), 123-126 (NKID), 203-210 (GRVNVGKS), 250-254 (DTAGI), and 314-317 (NKWD) each bind GTP. One can recognise a KH-like domain in the interval 369–453 (KRIPTSLLNS…PLILNAKDKK (85 aa)).

It belongs to the TRAFAC class TrmE-Era-EngA-EngB-Septin-like GTPase superfamily. EngA (Der) GTPase family. Associates with the 50S ribosomal subunit.

GTPase that plays an essential role in the late steps of ribosome biogenesis. This is GTPase Der from Helicobacter pylori (strain ATCC 700392 / 26695) (Campylobacter pylori).